The chain runs to 310 residues: Ribosomal RNA small subunit methyltransferase H (310 aa).

Residues 33–35, Asp53, Phe79, Asp100, and Gln107 each bind S-adenosyl-L-methionine; that span reads AGH.

The protein belongs to the methyltransferase superfamily. RsmH family.

It localises to the cytoplasm. The enzyme catalyses cytidine(1402) in 16S rRNA + S-adenosyl-L-methionine = N(4)-methylcytidine(1402) in 16S rRNA + S-adenosyl-L-homocysteine + H(+). Its function is as follows. Specifically methylates the N4 position of cytidine in position 1402 (C1402) of 16S rRNA. This is Ribosomal RNA small subunit methyltransferase H from Desulfitobacterium hafniense (strain DSM 10664 / DCB-2).